The primary structure comprises 368 residues: Seipin-1 (368 aa).

The next 3 membrane-spanning stretches (helical) occupy residues 26 to 46 (WFMVLVTIQADLIYNALVVLS), 101 to 121 (VMVLALILAVVIGVGIVSLYV), and 292 to 312 (LCVWTSMYLYVAILTALLWCF). The tract at residues 344–368 (MERRRRERRNQPRRRNFATTQKSYT) is disordered. The span at 346 to 359 (RRRRERRNQPRRRN) shows a compositional bias: basic residues.

The protein belongs to the seipin family. Expressed in seeds and young seedlings. Not detected in leaves.

It localises to the endoplasmic reticulum membrane. Its function is as follows. Involved in lipid metabolism and lipid droplet (LD) morphology, number, and size. Facilitates the formation of large-sized LDs and modulates triacylglycerol accumulation. Induces probably a reorganization of the endoplasmic reticulum into LD-forming domains. This Arabidopsis thaliana (Mouse-ear cress) protein is Seipin-1.